A 516-amino-acid polypeptide reads, in one-letter code: Gastrula zinc finger protein XlCGF53.1 (516 aa).

Disordered stretches follow at residues 1–33 and 200–220; these read MGMW…GKKE and GNQS…TDKP. The segment covering 200 to 218 has biased composition (polar residues); sequence GNQSDCSINPLTEQIQGTD. C2H2-type zinc fingers lie at residues 312–334, 354–376, 382–404, 410–432, 438–460, 466–488, and 494–516; these read YICS…QKTH, FPCS…QSSH, YACS…LKLH, FPCS…RRVH, YSCS…QRTH, and FSCT…HRTH.

The protein belongs to the krueppel C2H2-type zinc-finger protein family.

Its subcellular location is the nucleus. Its function is as follows. May be involved in transcriptional regulation. The protein is Gastrula zinc finger protein XlCGF53.1 of Xenopus laevis (African clawed frog).